A 37-amino-acid polypeptide reads, in one-letter code: Large ribosomal subunit protein bL36 (37 aa).

Belongs to the bacterial ribosomal protein bL36 family.

This is Large ribosomal subunit protein bL36 from Persephonella marina (strain DSM 14350 / EX-H1).